We begin with the raw amino-acid sequence, 89 residues long: UPF0297 protein OB2008 (89 aa).

The protein belongs to the UPF0297 family.

The sequence is that of UPF0297 protein OB2008 from Oceanobacillus iheyensis (strain DSM 14371 / CIP 107618 / JCM 11309 / KCTC 3954 / HTE831).